A 436-amino-acid chain; its full sequence is Xylose isomerase (436 aa).

Catalysis depends on residues H100 and D103. Residues E231, E267, H270, D295, D306, D308, and D338 each contribute to the Mg(2+) site.

Belongs to the xylose isomerase family. In terms of assembly, homotetramer. It depends on Mg(2+) as a cofactor.

The protein resides in the cytoplasm. The enzyme catalyses alpha-D-xylose = alpha-D-xylulofuranose. The sequence is that of Xylose isomerase from Rhizobium johnstonii (strain DSM 114642 / LMG 32736 / 3841) (Rhizobium leguminosarum bv. viciae).